Consider the following 348-residue polypeptide: Maintenance of mitochondrial morphology protein 1 (348 aa).

At M1–G35 the chain is on the lumenal side. A helical transmembrane segment spans residues L36–F56. Topologically, residues S57–E348 are cytoplasmic. The SMP-LTD domain occupies N114–P323. The tract at residues R328–E348 is disordered.

Belongs to the MMM1 family. Homodimer. Component of the ER-mitochondria encounter structure (ERMES) or MDM complex, composed of MMM1, MDM10, MDM12 and MDM34. An MMM1 homodimer associates with one molecule of MDM12 on each side in a pairwise head-to-tail manner, and the SMP-LTD domains of MMM1 and MDM12 generate a continuous hydrophobic tunnel for phospholipid trafficking.

It localises to the endoplasmic reticulum membrane. Functionally, component of the ERMES/MDM complex, which serves as a molecular tether to connect the endoplasmic reticulum (ER) and mitochondria. Components of this complex are involved in the control of mitochondrial shape and protein biogenesis, and function in nonvesicular lipid trafficking between the ER and mitochondria. The MDM12-MMM1 subcomplex functions in the major beta-barrel assembly pathway that is responsible for biogenesis of all outer membrane beta-barrel proteins, and acts in a late step after the SAM complex. The MDM10-MDM12-MMM1 subcomplex further acts in the TOM40-specific pathway after the action of the MDM12-MMM1 complex. Essential for establishing and maintaining the structure of mitochondria and maintenance of mtDNA nucleoids. This Clavispora lusitaniae (strain ATCC 42720) (Yeast) protein is Maintenance of mitochondrial morphology protein 1.